Here is a 1079-residue protein sequence, read N- to C-terminus: Spermatogenesis-associated protein 31G1 (1079 aa).

Disordered stretches follow at residues 97-145 (EVEE…GSEG), 261-281 (EDLE…SPSV), 297-317 (GVLS…LEVL), 331-362 (KMPQ…EGGL), 376-412 (EKPQ…RYKP), 506-566 (NLWA…SPPP), 637-678 (VPVF…EQRK), and 840-975 (PHSS…NHPA). Residues 98-113 (VEEEGEEEEEGEDEAS) show a composition bias toward acidic residues. Pro residues predominate over residues 336–345 (FEPPMPPPCQ). The span at 398-412 (LQRESSLEDPSRYKP) shows a compositional bias: basic and acidic residues. Composition is skewed to low complexity over residues 551 to 562 (NSSASRSPSLAL) and 645 to 655 (SSPSSNSVSKS). Over residues 669-678 (PDGEAVEQRK) the composition is skewed to basic and acidic residues. The span at 942–951 (AKKREHPRKP) shows a compositional bias: basic residues.

Functionally, dispensable for normal development and fertility. The polypeptide is Spermatogenesis-associated protein 31G1 (Homo sapiens (Human)).